Consider the following 1085-residue polypeptide: Solute carrier family 12 member 4 (1085 aa).

Residues 1-119 (MPHFTVVPVD…RRAAKAPSMG (119 aa)) are Cytoplasmic-facing. Ser-24, Ser-47, Ser-51, Ser-81, and Ser-88 each carry phosphoserine. The tract at residues 32-56 (AEREDSDGQGNHRENSPFLSPLDAS) is disordered. The chain crosses the membrane as a discontinuously helical span at residues 120-141 (TLMGVYLPCLQNIFGVILFLRL). K(+)-binding residues include Asn-131 and Ile-132. The Extracellular segment spans residues 142 to 149 (TWMVGTAG). Residues 150–172 (VLQALLIVLICCCCTLLTAISMS) form a helical membrane-spanning segment. Topologically, residues 173–196 (AIATNGVVPAGGSYFMISRSLGPE) are cytoplasmic. Residues 197-225 (FGGAVGLCFYLGTTFAAAMYILGAIEILL) form a helical membrane-spanning segment. K(+) is bound at residue Tyr-216. Residues 226 to 248 (TYIAPPAAIFYPSGTHDMSSATL) lie on the Extracellular side of the membrane. 2 consecutive transmembrane segments (helical) span residues 249 to 271 (NNMR…VGVK) and 272 to 297 (YVNK…GGIK). Over 298–419 (SAFDPPVFPV…LYVVADIATS (122 aa)) the chain is Extracellular. Cys-308 and Cys-323 form a disulfide bridge. Residues Asn-312, Asn-331, and Asn-347 are each glycosylated (N-linked (GlcNAc...) asparagine). Cys-343 and Cys-353 form a disulfide bridge. A helical transmembrane segment spans residues 420–440 (FTVLVGIFFPSVTGIMAGSNR). K(+) contacts are provided by Pro-429 and Thr-432. Chloride is bound by residues Gly-433, Ile-434, and Met-435. At 441 to 450 (SGDLRDAQKS) the chain is on the cytoplasmic side. The chain crosses the membrane as a helical span at residues 451 to 473 (IPVGTILAIVTTSLVYFSSVILF). Residues 474–504 (GACIEGVVLRDKYGDGVSRNLVVGTLAWPSP) lie on the Extracellular side of the membrane. A helical transmembrane segment spans residues 505 to 531 (WVIVVGSFFSTCGAGLQSLTGAPRLLQ). Over 532 to 554 (AIAKDNIIPFLRVFGHGKANGEP) the chain is Cytoplasmic. A run of 2 helical transmembrane segments spans residues 555–575 (TWAL…ASLD) and 576–598 (MVAP…ACAV). Residue Tyr-589 coordinates chloride. The Cytoplasmic portion of the chain corresponds to 599-612 (QTLLRTPNWRPRFK). 2 helical membrane-spanning segments follow: residues 613 to 635 (YYHW…VSSW) and 636 to 651 (YYAL…IYKY). Residues 652–1085 (IEYQGAEKEW…GGREVITIYS (434 aa)) are Cytoplasmic-facing. The segment at 665–681 (IRGLSLSAARYALLRLE) is scissor helix. ATP is bound by residues Leu-697, Lys-699, Lys-707, Tyr-708, and Val-730. Ser-734 carries the post-translational modification Phosphoserine. Residues Gly-794, Trp-795, and Tyr-797 each contribute to the ATP site. Phosphoserine is present on residues Ser-916 and Ser-967. Phosphothreonine is present on Thr-983. The residue at position 1050 (Ser-1050) is a Phosphoserine.

The protein belongs to the SLC12A transporter family. K/Cl co-transporter subfamily. In terms of assembly, homodimer; adopts a domain-swap conformation at the scissor helices connecting the transmembrane domain and C-terminal domain. Heterodimer with other K-Cl cotransporters. In terms of processing, N-glycosylated. Phosphorylated, phosphorylation may regulate transporter activity. Ubiquitous.

It is found in the cell membrane. The catalysed reaction is K(+)(in) + chloride(in) = K(+)(out) + chloride(out). Inhibited by WNK3. Mediates electroneutral potassium-chloride cotransport when activated by cell swelling. May contribute to cell volume homeostasis in single cells. May be involved in the regulation of basolateral Cl(-) exit in NaCl absorbing epithelia. In Rattus norvegicus (Rat), this protein is Solute carrier family 12 member 4 (Slc12a4).